The following is a 457-amino-acid chain: Siroheme synthase (457 aa).

The tract at residues 1–204 (MDHLPIFCQL…ADEKAVNATT (204 aa)) is precorrin-2 dehydrogenase /sirohydrochlorin ferrochelatase. Residues 22–23 (DV) and 43–44 (LT) contribute to the NAD(+) site. Phosphoserine is present on Ser-128. The interval 216–457 (GEVVLVGAGP…RDKLNWFSNY (242 aa)) is uroporphyrinogen-III C-methyltransferase. Pro-225 is an S-adenosyl-L-methionine binding site. The active-site Proton acceptor is the Asp-248. Lys-270 serves as the catalytic Proton donor. S-adenosyl-L-methionine is bound by residues 301-303 (GGD), Ile-306, 331-332 (TA), Met-382, and Gly-411.

This sequence in the N-terminal section; belongs to the precorrin-2 dehydrogenase / sirohydrochlorin ferrochelatase family. In the C-terminal section; belongs to the precorrin methyltransferase family.

The catalysed reaction is uroporphyrinogen III + 2 S-adenosyl-L-methionine = precorrin-2 + 2 S-adenosyl-L-homocysteine + H(+). It catalyses the reaction precorrin-2 + NAD(+) = sirohydrochlorin + NADH + 2 H(+). The enzyme catalyses siroheme + 2 H(+) = sirohydrochlorin + Fe(2+). It participates in cofactor biosynthesis; adenosylcobalamin biosynthesis; precorrin-2 from uroporphyrinogen III: step 1/1. The protein operates within cofactor biosynthesis; adenosylcobalamin biosynthesis; sirohydrochlorin from precorrin-2: step 1/1. Its pathway is porphyrin-containing compound metabolism; siroheme biosynthesis; precorrin-2 from uroporphyrinogen III: step 1/1. It functions in the pathway porphyrin-containing compound metabolism; siroheme biosynthesis; siroheme from sirohydrochlorin: step 1/1. It participates in porphyrin-containing compound metabolism; siroheme biosynthesis; sirohydrochlorin from precorrin-2: step 1/1. Multifunctional enzyme that catalyzes the SAM-dependent methylations of uroporphyrinogen III at position C-2 and C-7 to form precorrin-2 via precorrin-1. Then it catalyzes the NAD-dependent ring dehydrogenation of precorrin-2 to yield sirohydrochlorin. Finally, it catalyzes the ferrochelation of sirohydrochlorin to yield siroheme. The polypeptide is Siroheme synthase (Salmonella choleraesuis (strain SC-B67)).